The following is a 495-amino-acid chain: 3-octaprenyl-4-hydroxybenzoate carboxy-lyase (495 aa).

Residue N171 coordinates Mn(2+). Prenylated FMN is bound by residues 174–176 (IYR), 188–190 (RWL), and 193–194 (RG). Residue E237 coordinates Mn(2+). D286 functions as the Proton donor in the catalytic mechanism.

This sequence belongs to the UbiD family. In terms of assembly, homohexamer. It depends on prenylated FMN as a cofactor. Mn(2+) is required as a cofactor.

The protein localises to the cell membrane. It catalyses the reaction a 4-hydroxy-3-(all-trans-polyprenyl)benzoate + H(+) = a 2-(all-trans-polyprenyl)phenol + CO2. Its pathway is cofactor biosynthesis; ubiquinone biosynthesis. Functionally, catalyzes the decarboxylation of 3-octaprenyl-4-hydroxy benzoate to 2-octaprenylphenol, an intermediate step in ubiquinone biosynthesis. The sequence is that of 3-octaprenyl-4-hydroxybenzoate carboxy-lyase from Hamiltonella defensa subsp. Acyrthosiphon pisum (strain 5AT).